The primary structure comprises 1243 residues: Interphotoreceptor matrix proteoglycan 2 (1243 aa).

The first 27 residues, 1 to 27 (MIMFLPVGRMSLGILILFLTGGNLVSA), serve as a signal peptide directing secretion. Residues 28–1106 (SEERQEPMHA…EFVSEPFVIG (1079 aa)) lie on the Extracellular side of the membrane. Residues 205-234 (GLASESSAASPQESISNEIENVTEEPTQPA) are disordered. A compositionally biased stretch (low complexity) spans 207 to 220 (ASESSAASPQESIS). Positions 221 to 230 (NEIENVTEEP) are enriched in polar residues. N225 is a glycosylation site (N-linked (GlcNAc...) asparagine). The 115-residue stretch at 235–349 (AEQIAEFSIQ…KPTAVYTISN (115 aa)) folds into the SEA 1 domain. Residues 255-263 (RDPSSALYR) are hyaluronan-binding motif involved in chondroitin sulfate A-binding. N297, N316, and N366 each carry an N-linked (GlcNAc...) asparagine glycan. O-linked (GalNAc...) threonine glycosylation is found at T427, T428, and T429. N582 carries an N-linked (GlcNAc...) asparagine glycan. T701, T704, and T712 each carry an O-linked (GalNAc...) threonine glycan. The span at 748-762 (EDMVHTESSSHKELD) shows a compositional bias: basic and acidic residues. The disordered stretch occupies residues 748–768 (EDMVHTESSSHKELDSEVPVS). Residues T817 and T888 are each glycosylated (O-linked (GalNAc...) threonine). Residues 900–1013 (GALVVFFSLR…YSLDVESGDE (114 aa)) enclose the SEA 2 domain. N-linked (GlcNAc...) asparagine glycosylation is found at N945 and N959. EGF-like domains are found at residues 1013–1054 (EANP…LPCQ) and 1055–1096 (SLCD…QHCE). Intrachain disulfides connect C1017–C1028, C1022–C1039, C1041–C1053, C1057–C1070, C1064–C1080, and C1082–C1095. Positions 1083–1091 (RVGSNWWYR) are hyaluronan-binding motif involved in chondroitin sulfate C-binding. A helical transmembrane segment spans residues 1107 to 1127 (ITIASVVSFLLVASAVVFFLV). The hyaluronan-binding motif involved in chondroitin sulfate A- and C-binding stretch occupies residues 1128 to 1136 (KMLQAQNVR). Over 1128 to 1243 (KMLQAQNVRR…FVREHQMEEL (116 aa)) the chain is Cytoplasmic. The tract at residues 1139–1147 (RQRPTSSSR) is hyaluronan-binding motif involved in chondroitin sulfate C-binding. The interval 1212–1220 (KEEIQERMR) is hyaluronan-binding motif involved in chondroitin sulfate A- and C-binding motif.

Expressed in the retina (at protein level). Expressed in the pineal gland.

It is found in the photoreceptor outer segment membrane. Its subcellular location is the photoreceptor inner segment membrane. The protein resides in the secreted. It localises to the extracellular space. The protein localises to the extracellular matrix. It is found in the interphotoreceptor matrix. Its function is as follows. Chondroitin sulfate- and hyaluronan-binding proteoglycan involved in the organization of interphotoreceptor matrix; may participate in the maturation and maintenance of the light-sensitive photoreceptor outer segment. Binds heparin. The protein is Interphotoreceptor matrix proteoglycan 2 (Impg2) of Mus musculus (Mouse).